The following is a 539-amino-acid chain: Protein lin-14 (539 aa).

Disordered stretches follow at residues 162–230 (PTLP…SNHS) and 262–293 (ETAP…PRKP). Composition is skewed to polar residues over residues 163-183 (TLPN…GTDD) and 193-214 (SVDS…NQNI). A compositionally biased stretch (low complexity) spans 274–284 (NGTTNGTAKAG). The involved in sequence-specific DNA-binding stretch occupies residues 296-440 (DDIVKIVRNQ…CRRVRHAKKT (145 aa)).

Cleaved by caspase ced-3 in vitro. In terms of tissue distribution, high levels in hypodermal, intestinal, body wall muscle, nerve ring, and ventral nerve cord cells of embryos and L1 animals.

It localises to the nucleus. Its function is as follows. Heterochronic protein which controls the choice of stage specific cell fates. Involved in the temporal progression of vulval fate patterning, possibly by inhibiting lin-12. Acts as a transcription factor involved in the stage-specific repression of various genes, including insulin/insulin-like growth factor gene ins-33 and neuropeptide-encoding gene nlp-45. Binds to the consensus sequence 5'-[CT]GGA[AG]-3' in the regulatory elements of target genes. Plays a role in governing the developmental timing of male tail tip morphogenesis. Plays a role in controlling the timing of seam cell development during the larval stages. Plays a role in promoting survival at high temperatures in larvae. Involved in maintenance of the architecture of the ventral nerve cord, perhaps acting via modulating expression of the immunoglobulin domain gene zig-4. Functionally, may specify L2 and later cell fates, creating a temporal switch. May be involved in specifying L1 cell fates. This chain is Protein lin-14, found in Caenorhabditis elegans.